The following is a 212-amino-acid chain: Proheparin-binding EGF-like growth factor (212 aa).

Residues 1-18 form the signal peptide; sequence MDGRVVLIHALLTAVCSA. Residues 19 to 167 lie on the Extracellular side of the membrane; sequence AVGKFGRDGP…PSTYDHTTAL (149 aa). A disordered region spans residues 82–108; the sequence is SKPQGPVTPKKKGNGNKRRKGKGLGKK. A compositionally biased stretch (basic residues) spans 90–106; that stretch reads PKKKGNGNKRRKGKGLG. The EGF-like domain occupies 108 to 148; that stretch reads KRDPCLRKYKDFCIHGECKYIRELGAPSCICQPGYHGERCH. 3 cysteine pairs are disulfide-bonded: C112/C125, C120/C136, and C138/C147. Residues 153 to 212 constitute a propeptide, C-terminal; it reads PVEHPPSTYDHTTALAVVAVVLSSLCLVIITALLMFRCHKRGVYDVENEEKIKLGITVNH. A helical transmembrane segment spans residues 168-188; it reads AVVAVVLSSLCLVIITALLMF. At 189–212 the chain is on the cytoplasmic side; the sequence is RCHKRGVYDVENEEKIKLGITVNH.

Interacts with CNIH2.

The protein localises to the secreted. It localises to the extracellular space. It is found in the cell membrane. Its function is as follows. May be involved in macrophage-mediated cellular proliferation. It is mitogenic for fibroblasts and smooth muscle but not endothelial cells. It is able to bind EGF receptor/EGFR with higher affinity than EGF itself and is a far more potent mitogen for smooth muscle cells than EGF. Plays an important role in the proper development of cranial nerves by inhibiting the migration of the cranial neural crest cells (NCCs) into the odd-numbered neuromeres (r3 and r5) of the hindbrain Plays a role in mediating v-Jun-induced oncogenic transformation. This Gallus gallus (Chicken) protein is Proheparin-binding EGF-like growth factor (HBEGF).